The sequence spans 273 residues: 4-hydroxy-tetrahydrodipicolinate reductase (273 aa).

NAD(+)-binding positions include 8–13 (GAAGRM), Glu-34, 102–104 (GTT), and 128–131 (SSNM). His-160 functions as the Proton donor/acceptor in the catalytic mechanism. Residue His-161 coordinates (S)-2,3,4,5-tetrahydrodipicolinate. The active-site Proton donor is Lys-164. (S)-2,3,4,5-tetrahydrodipicolinate is bound at residue 170–171 (GT).

It belongs to the DapB family.

The protein resides in the cytoplasm. The enzyme catalyses (S)-2,3,4,5-tetrahydrodipicolinate + NAD(+) + H2O = (2S,4S)-4-hydroxy-2,3,4,5-tetrahydrodipicolinate + NADH + H(+). It carries out the reaction (S)-2,3,4,5-tetrahydrodipicolinate + NADP(+) + H2O = (2S,4S)-4-hydroxy-2,3,4,5-tetrahydrodipicolinate + NADPH + H(+). The protein operates within amino-acid biosynthesis; L-lysine biosynthesis via DAP pathway; (S)-tetrahydrodipicolinate from L-aspartate: step 4/4. Functionally, catalyzes the conversion of 4-hydroxy-tetrahydrodipicolinate (HTPA) to tetrahydrodipicolinate. In Methanobrevibacter smithii (strain ATCC 35061 / DSM 861 / OCM 144 / PS), this protein is 4-hydroxy-tetrahydrodipicolinate reductase.